The following is a 124-amino-acid chain: Small ribosomal subunit protein uS13 (124 aa).

A compositionally biased stretch (basic residues) spans 94–117; that stretch reads NLPVRGQRTRTNARTRKGPRKTVA. Residues 94–124 are disordered; sequence NLPVRGQRTRTNARTRKGPRKTVANKKIESK.

This sequence belongs to the universal ribosomal protein uS13 family. Part of the 30S ribosomal subunit. Forms a loose heterodimer with protein S19. Forms two bridges to the 50S subunit in the 70S ribosome.

In terms of biological role, located at the top of the head of the 30S subunit, it contacts several helices of the 16S rRNA. In the 70S ribosome it contacts the 23S rRNA (bridge B1a) and protein L5 of the 50S subunit (bridge B1b), connecting the 2 subunits; these bridges are implicated in subunit movement. Contacts the tRNAs in the A and P-sites. The chain is Small ribosomal subunit protein uS13 from Mycoplasma pneumoniae (strain ATCC 29342 / M129 / Subtype 1) (Mycoplasmoides pneumoniae).